Reading from the N-terminus, the 232-residue chain is Peptide deformylase (232 aa).

The Fe cation site is built by Cys-135 and His-178. Glu-179 is a catalytic residue. His-182 lines the Fe cation pocket.

Belongs to the polypeptide deformylase family. The cofactor is Fe(2+).

It catalyses the reaction N-terminal N-formyl-L-methionyl-[peptide] + H2O = N-terminal L-methionyl-[peptide] + formate. In terms of biological role, removes the formyl group from the N-terminal Met of newly synthesized proteins. Requires at least a dipeptide for an efficient rate of reaction. N-terminal L-methionine is a prerequisite for activity but the enzyme has broad specificity at other positions. The polypeptide is Peptide deformylase (Deinococcus radiodurans (strain ATCC 13939 / DSM 20539 / JCM 16871 / CCUG 27074 / LMG 4051 / NBRC 15346 / NCIMB 9279 / VKM B-1422 / R1)).